The following is an 87-amino-acid chain: Small ribosomal subunit protein uS17 (87 aa).

Belongs to the universal ribosomal protein uS17 family. In terms of assembly, part of the 30S ribosomal subunit.

Its function is as follows. One of the primary rRNA binding proteins, it binds specifically to the 5'-end of 16S ribosomal RNA. The chain is Small ribosomal subunit protein uS17 from Bacillus mycoides (strain KBAB4) (Bacillus weihenstephanensis).